We begin with the raw amino-acid sequence, 151 residues long: Endoribonuclease YbeY (151 aa).

Zn(2+) contacts are provided by histidine 114, histidine 118, and histidine 124.

It belongs to the endoribonuclease YbeY family. It depends on Zn(2+) as a cofactor.

It is found in the cytoplasm. Single strand-specific metallo-endoribonuclease involved in late-stage 70S ribosome quality control and in maturation of the 3' terminus of the 16S rRNA. This Hamiltonella defensa subsp. Acyrthosiphon pisum (strain 5AT) protein is Endoribonuclease YbeY.